A 236-amino-acid chain; its full sequence is Ribose-5-phosphate isomerase A (236 aa).

Substrate-binding positions include 29–32 (SGST), 86–89 (DGAD), and 99–102 (KGGG). E108 (proton acceptor) is an active-site residue. Residue K126 coordinates substrate.

This sequence belongs to the ribose 5-phosphate isomerase family. In terms of assembly, homodimer.

The catalysed reaction is aldehydo-D-ribose 5-phosphate = D-ribulose 5-phosphate. It functions in the pathway carbohydrate degradation; pentose phosphate pathway; D-ribose 5-phosphate from D-ribulose 5-phosphate (non-oxidative stage): step 1/1. Its function is as follows. Catalyzes the reversible conversion of ribose-5-phosphate to ribulose 5-phosphate. The polypeptide is Ribose-5-phosphate isomerase A (Prochlorococcus marinus (strain NATL2A)).